The chain runs to 110 residues: Cyclin-dependent protein kinase inhibitor SMR8 (110 aa).

Interacts with CDKA-1 and D-type cyclins. In terms of tissue distribution, expressed in the root vascular tissue.

In terms of biological role, probable cyclin-dependent protein kinase (CDK) inhibitor that functions as a repressor of mitosis in the endoreduplication cell cycle. This is Cyclin-dependent protein kinase inhibitor SMR8 from Arabidopsis thaliana (Mouse-ear cress).